Here is a 205-residue protein sequence, read N- to C-terminus: LexA repressor (205 aa).

The segment at residues 28–48 is a DNA-binding region (H-T-H motif); the sequence is RAEIAKRLGFKSANAAEEHLK. Residues Ser-122 and Lys-159 each act as for autocatalytic cleavage activity in the active site.

It belongs to the peptidase S24 family. Homodimer.

The enzyme catalyses Hydrolysis of Ala-|-Gly bond in repressor LexA.. Represses a number of genes involved in the response to DNA damage (SOS response), including recA and lexA. In the presence of single-stranded DNA, RecA interacts with LexA causing an autocatalytic cleavage which disrupts the DNA-binding part of LexA, leading to derepression of the SOS regulon and eventually DNA repair. The polypeptide is LexA repressor (Shewanella woodyi (strain ATCC 51908 / MS32)).